Here is a 161-residue protein sequence, read N- to C-terminus: Nucleotide-binding protein Lferr_1091 (161 aa).

It belongs to the YajQ family.

Functionally, nucleotide-binding protein. This Acidithiobacillus ferrooxidans (strain ATCC 53993 / BNL-5-31) (Leptospirillum ferrooxidans (ATCC 53993)) protein is Nucleotide-binding protein Lferr_1091.